Consider the following 306-residue polypeptide: Immune protein Tsi7 (306 aa).

Interacts with Tse7.

Its function is as follows. Immunity protein that plays a role in preventing early activation of toxin Tse7. Protects thereby cells from Tse7 DNase activity. The sequence is that of Immune protein Tsi7 from Pseudomonas aeruginosa (strain ATCC 15692 / DSM 22644 / CIP 104116 / JCM 14847 / LMG 12228 / 1C / PRS 101 / PAO1).